Reading from the N-terminus, the 98-residue chain is Integration host factor subunit alpha (98 aa).

Basic and acidic residues predominate over residues 53 to 69 (DLREKSERPGRNPKTGE). The disordered stretch occupies residues 53–73 (DLREKSERPGRNPKTGEDIPI).

Belongs to the bacterial histone-like protein family. In terms of assembly, heterodimer of an alpha and a beta chain.

This protein is one of the two subunits of integration host factor, a specific DNA-binding protein that functions in genetic recombination as well as in transcriptional and translational control. The sequence is that of Integration host factor subunit alpha from Aliivibrio fischeri (strain ATCC 700601 / ES114) (Vibrio fischeri).